Consider the following 154-residue polypeptide: Superoxide dismutase [Cu-Zn] (154 aa).

The Cu cation site is built by histidine 47, histidine 49, and histidine 64. Cysteine 58 and cysteine 147 are disulfide-bonded. Positions 64, 72, 81, and 84 each coordinate Zn(2+). Histidine 121 is a binding site for Cu cation.

It belongs to the Cu-Zn superoxide dismutase family. Homodimer. Requires Cu cation as cofactor. Zn(2+) serves as cofactor.

It is found in the cytoplasm. It catalyses the reaction 2 superoxide + 2 H(+) = H2O2 + O2. Destroys radicals which are normally produced within the cells and which are toxic to biological systems. This Pinus sylvestris (Scotch pine) protein is Superoxide dismutase [Cu-Zn] (SODCC).